A 380-amino-acid polypeptide reads, in one-letter code: Glucose-1-phosphate adenylyltransferase (380 aa).

Alpha-D-glucose 1-phosphate is bound by residues Gly-164, 179–180 (EK), and Ser-190.

Belongs to the bacterial/plant glucose-1-phosphate adenylyltransferase family. In terms of assembly, homotetramer.

It catalyses the reaction alpha-D-glucose 1-phosphate + ATP + H(+) = ADP-alpha-D-glucose + diphosphate. The protein operates within glycan biosynthesis; glycogen biosynthesis. Involved in the biosynthesis of ADP-glucose, a building block required for the elongation reactions to produce glycogen. Catalyzes the reaction between ATP and alpha-D-glucose 1-phosphate (G1P) to produce pyrophosphate and ADP-Glc. This is Glucose-1-phosphate adenylyltransferase from Lacticaseibacillus casei (strain BL23) (Lactobacillus casei).